The sequence spans 343 residues: Phenylalanine--tRNA ligase alpha subunit (343 aa).

Glu-256 provides a ligand contact to Mg(2+).

The protein belongs to the class-II aminoacyl-tRNA synthetase family. Phe-tRNA synthetase alpha subunit type 1 subfamily. Tetramer of two alpha and two beta subunits. The cofactor is Mg(2+).

The protein localises to the cytoplasm. It catalyses the reaction tRNA(Phe) + L-phenylalanine + ATP = L-phenylalanyl-tRNA(Phe) + AMP + diphosphate + H(+). This chain is Phenylalanine--tRNA ligase alpha subunit, found in Phytoplasma australiense.